The chain runs to 76 residues: UPF0291 protein GWCH70_1239 (76 aa).

Residues 54–76 (VIDPNGNDVTPKKLKESQKSRLH) form a disordered region. Positions 63 to 76 (TPKKLKESQKSRLH) are enriched in basic and acidic residues.

Belongs to the UPF0291 family.

It localises to the cytoplasm. The chain is UPF0291 protein GWCH70_1239 from Geobacillus sp. (strain WCH70).